A 125-amino-acid polypeptide reads, in one-letter code: MRLAGVNLPLNKHAVIALTHVYGIGRTSAENILRKAGIAYDKKISELSDEEAHAIREIIAEEYKVEGQARGEQQTAIKRLMDIGCYRGLRHRRSLPVRGQRTRTNARTRKGKRKTVAGKKKAVKK.

Positions 94-125 are disordered; it reads SLPVRGQRTRTNARTRKGKRKTVAGKKKAVKK.

It belongs to the universal ribosomal protein uS13 family. Part of the 30S ribosomal subunit. Forms a loose heterodimer with protein S19. Forms two bridges to the 50S subunit in the 70S ribosome.

In terms of biological role, located at the top of the head of the 30S subunit, it contacts several helices of the 16S rRNA. In the 70S ribosome it contacts the 23S rRNA (bridge B1a) and protein L5 of the 50S subunit (bridge B1b), connecting the 2 subunits; these bridges are implicated in subunit movement. Contacts the tRNAs in the A and P-sites. This Chlorobium chlorochromatii (strain CaD3) protein is Small ribosomal subunit protein uS13.